The sequence spans 914 residues: Coatomer subunit beta' (914 aa).

WD repeat units lie at residues 13–54 (SRSD…KDFE), 55–94 (VCDVPVRSARFVARKNWILTGSDDMQIRVFNYNTLEKVHS), 97–136 (AHSDYLRCIAVHPTQPLVLTSSDDMLIKLWNWEKMWACQR), 140–180 (GHTH…ANFT), 183–224 (GHEK…CVQT), 227–266 (GHAQNISAVCFHPELPIVLTGSEDGTVRIWHSGTYRLETC), and 352–390 (ACEIYPQTIAHNPNGRFVVVCGDGEYIIYTSMALRNKAF).

It belongs to the WD repeat COPB2 family. Oligomeric complex that consists of at least the alpha, beta, beta', gamma, delta, epsilon and zeta subunits.

The protein localises to the cytoplasm. It is found in the golgi apparatus membrane. Its subcellular location is the cytoplasmic vesicle. It localises to the COPI-coated vesicle membrane. The coatomer is a cytosolic protein complex that binds to dilysine motifs and reversibly associates with Golgi non-clathrin-coated vesicles, which further mediate biosynthetic protein transport from the ER, via the Golgi up to the trans Golgi network. Coatomer complex is required for budding from Golgi membranes, and is essential for the retrograde Golgi-to-ER transport of dilysine-tagged proteins. The chain is Coatomer subunit beta' from Drosophila melanogaster (Fruit fly).